The primary structure comprises 367 residues: MEAERLNAIAQQLDDLRARGRELRRYLDYDEKSSKLEEVTRALEDPAVWNNAEKAQELGKEKRQLEDVVHNLRDIESLSSDLKDLFDLAEAEDDEDTLAAVEADIGELQAKVHALEFRRMFSNPMDPNPCFIEIQAGAGGTEAQDWAGMLERMYLRYCERKGFNVELMEESEGEVAGIKGATIKVSGDYAYGFLRTETGIHRLVRKSPFDSNARRHTSFSSVFVYPEVDDSIQIDINPADLRIDTYRASGAGGQHINKTDSAVRITHEPTGVVVQCQNDRSQHKNKAEAMSMLKARLYELELRKRQSEQQKLEDSKSDIGWGHQIRSYVLDQSRIKDLRTNFEVGNTQAVLDGDLDDFIAASLKQGV.

Gln-254 is subject to N5-methylglutamine.

It belongs to the prokaryotic/mitochondrial release factor family. Methylated by PrmC. Methylation increases the termination efficiency of RF2.

The protein localises to the cytoplasm. Functionally, peptide chain release factor 2 directs the termination of translation in response to the peptide chain termination codons UGA and UAA. The polypeptide is Peptide chain release factor 2 (Aromatoleum aromaticum (strain DSM 19018 / LMG 30748 / EbN1) (Azoarcus sp. (strain EbN1))).